Consider the following 208-residue polypeptide: NAD(P)H-quinone oxidoreductase subunit I (208 aa).

4Fe-4S ferredoxin-type domains are found at residues 55–84 (GRIH…VDWV) and 95–124 (RNYS…MTEE). Residues Cys64, Cys67, Cys70, Cys74, Cys104, Cys107, Cys110, and Cys114 each coordinate [4Fe-4S] cluster.

The protein belongs to the complex I 23 kDa subunit family. NDH-1 is composed of at least 11 different subunits. It depends on [4Fe-4S] cluster as a cofactor.

It localises to the cellular thylakoid membrane. The enzyme catalyses a plastoquinone + NADH + (n+1) H(+)(in) = a plastoquinol + NAD(+) + n H(+)(out). It carries out the reaction a plastoquinone + NADPH + (n+1) H(+)(in) = a plastoquinol + NADP(+) + n H(+)(out). Its function is as follows. NDH-1 shuttles electrons from an unknown electron donor, via FMN and iron-sulfur (Fe-S) centers, to quinones in the respiratory and/or the photosynthetic chain. The immediate electron acceptor for the enzyme in this species is believed to be plastoquinone. Couples the redox reaction to proton translocation, and thus conserves the redox energy in a proton gradient. The chain is NAD(P)H-quinone oxidoreductase subunit I from Prochlorococcus marinus (strain MIT 9312).